A 284-amino-acid polypeptide reads, in one-letter code: Probable plastid-lipid-associated protein 10, chloroplastic (284 aa).

The N-terminal 40 residues, 1 to 40, are a transit peptide targeting the chloroplast; that stretch reads MDRIASATFSCPAISLSRVCRISPFGLNIKTNHRKRFSCR.

It belongs to the PAP/fibrillin family.

Its subcellular location is the plastid. It localises to the chloroplast. It is found in the plastoglobule. The protein is Probable plastid-lipid-associated protein 10, chloroplastic (PAP10) of Arabidopsis thaliana (Mouse-ear cress).